A 650-amino-acid polypeptide reads, in one-letter code: Acetyl-coenzyme A synthetase (650 aa).

Residues Arg191–Arg194, Thr311, and Asn335 contribute to the CoA site. ATP contacts are provided by residues Gly387 to Pro389, Asp411 to Thr416, Asp500, and Arg515. Ser523 is a binding site for CoA. Arg526 provides a ligand contact to ATP. Mg(2+) contacts are provided by Val537, His539, and Val542. Arg584 lines the CoA pocket. At Lys609 the chain carries N6-acetyllysine.

It belongs to the ATP-dependent AMP-binding enzyme family. Mg(2+) is required as a cofactor. In terms of processing, acetylated. Deacetylation by the SIR2-homolog deacetylase activates the enzyme.

It catalyses the reaction acetate + ATP + CoA = acetyl-CoA + AMP + diphosphate. Its function is as follows. Catalyzes the conversion of acetate into acetyl-CoA (AcCoA), an essential intermediate at the junction of anabolic and catabolic pathways. AcsA undergoes a two-step reaction. In the first half reaction, AcsA combines acetate with ATP to form acetyl-adenylate (AcAMP) intermediate. In the second half reaction, it can then transfer the acetyl group from AcAMP to the sulfhydryl group of CoA, forming the product AcCoA. This is Acetyl-coenzyme A synthetase from Shewanella sp. (strain ANA-3).